A 758-amino-acid chain; its full sequence is 5-methyltetrahydropteroyltriglutamate--homocysteine methyltransferase (758 aa).

Residues 16–19 (RELK) and Lys116 contribute to the 5-methyltetrahydropteroyltri-L-glutamate site. Residues 436–438 (IGS) and Glu489 contribute to the L-homocysteine site. L-methionine contacts are provided by residues 436 to 438 (IGS) and Glu489. Residues 520–521 (RC) and Trp566 each bind 5-methyltetrahydropteroyltri-L-glutamate. Asp604 lines the L-homocysteine pocket. L-methionine is bound at residue Asp604. Glu610 is a 5-methyltetrahydropteroyltri-L-glutamate binding site. 3 residues coordinate Zn(2+): His646, Cys648, and Glu670. His699 functions as the Proton donor in the catalytic mechanism. Zn(2+) is bound at residue Cys731.

The protein belongs to the vitamin-B12 independent methionine synthase family. It depends on Zn(2+) as a cofactor.

It carries out the reaction 5-methyltetrahydropteroyltri-L-glutamate + L-homocysteine = tetrahydropteroyltri-L-glutamate + L-methionine. The protein operates within amino-acid biosynthesis; L-methionine biosynthesis via de novo pathway; L-methionine from L-homocysteine (MetE route): step 1/1. Functionally, catalyzes the transfer of a methyl group from 5-methyltetrahydrofolate to homocysteine resulting in methionine formation. The chain is 5-methyltetrahydropteroyltriglutamate--homocysteine methyltransferase from Xylella fastidiosa (strain 9a5c).